A 199-amino-acid polypeptide reads, in one-letter code: Thymidine kinase (199 aa).

ATP contacts are provided by residues 23 to 30 and 95 to 98; these read GSMFSGKT and DEAQ. E96 functions as the Proton acceptor in the catalytic mechanism. Zn(2+)-binding residues include C152, C155, C184, and C187.

Belongs to the thymidine kinase family. Homotetramer.

It localises to the cytoplasm. It carries out the reaction thymidine + ATP = dTMP + ADP + H(+). The polypeptide is Thymidine kinase (Bacteroides thetaiotaomicron (strain ATCC 29148 / DSM 2079 / JCM 5827 / CCUG 10774 / NCTC 10582 / VPI-5482 / E50)).